Reading from the N-terminus, the 102-residue chain is DNA/RNA-binding protein Alba 2 (102 aa).

The DNA site is built by arginine 10, arginine 13, arginine 40, arginine 42, asparagine 43, arginine 46, and arginine 86.

The protein belongs to the histone-like Alba family. Forms homodimers and homotetramers; oligomerization is enhanced and stabilized by DNA. Interacts with Alba 1.

It localises to the cytoplasm. Its subcellular location is the chromosome. In terms of biological role, binds double-stranded DNA tightly but without sequence specificity. Involved in DNA compaction. The sequence is that of DNA/RNA-binding protein Alba 2 from Aeropyrum pernix (strain ATCC 700893 / DSM 11879 / JCM 9820 / NBRC 100138 / K1).